The sequence spans 218 residues: Ribulose-phosphate 3-epimerase (218 aa).

Ser-10 is a substrate binding site. A divalent metal cation-binding residues include His-35, Asp-37, and His-68. The active-site Proton acceptor is Asp-37. Substrate contacts are provided by residues His-68, 144–147, 177–179, and 199–200; these read GFSG, DGG, and GS. Asp-177 is a binding site for a divalent metal cation. The Proton donor role is filled by Asp-177.

This sequence belongs to the ribulose-phosphate 3-epimerase family. A divalent metal cation is required as a cofactor.

It catalyses the reaction D-ribulose 5-phosphate = D-xylulose 5-phosphate. Its pathway is carbohydrate degradation. Functionally, catalyzes the reversible epimerization of D-ribulose 5-phosphate to D-xylulose 5-phosphate. This chain is Ribulose-phosphate 3-epimerase, found in Treponema pallidum (strain Nichols).